Consider the following 270-residue polypeptide: Non-structural maintenance of chromosomes element 1 homolog (270 aa).

The RING-type; atypical zinc finger occupies 185–226 (CNVCHKIAIQCQLCENCGIPLHLQCAGIYFRGIANPLCPNCK). A disordered region spans residues 236-270 (LSQVSSQGPSHSQAAPVRGRNQRSRNISTVARTSR). Polar residues-rich tracts occupy residues 237–248 (SQVSSQGPSHSQ) and 259–270 (SRNISTVARTSR).

The protein belongs to the NSE1 family. As to quaternary structure, component of the SMC5-SMC6 complex.

The protein resides in the nucleus. It localises to the chromosome. Its subcellular location is the telomere. The catalysed reaction is S-ubiquitinyl-[E2 ubiquitin-conjugating enzyme]-L-cysteine + [acceptor protein]-L-lysine = [E2 ubiquitin-conjugating enzyme]-L-cysteine + N(6)-ubiquitinyl-[acceptor protein]-L-lysine.. Functionally, RING-type zinc finger-containing E3 ubiquitin ligase that assembles with melanoma antigen protein (MAGE) to catalyze the direct transfer of ubiquitin from E2 ubiquitin-conjugating enzyme to a specific substrate. Within MAGE-RING ubiquitin ligase complex, MAGE stimulates and specifies ubiquitin ligase activity likely through recruitment and/or stabilization of the E2 ubiquitin-conjugating enzyme at the E3:substrate complex. Involved in maintenance of genome integrity, DNA damage response and DNA repair. In Xenopus tropicalis (Western clawed frog), this protein is Non-structural maintenance of chromosomes element 1 homolog (nsmce1).